Reading from the N-terminus, the 130-residue chain is Phosphoribosyl-AMP cyclohydrolase (130 aa).

D77 contributes to the Mg(2+) binding site. C78 contacts Zn(2+). 2 residues coordinate Mg(2+): D79 and D81. Residues C95 and C102 each contribute to the Zn(2+) site.

The protein belongs to the PRA-CH family. Homodimer. Mg(2+) serves as cofactor. The cofactor is Zn(2+).

The protein resides in the cytoplasm. The catalysed reaction is 1-(5-phospho-beta-D-ribosyl)-5'-AMP + H2O = 1-(5-phospho-beta-D-ribosyl)-5-[(5-phospho-beta-D-ribosylamino)methylideneamino]imidazole-4-carboxamide. It functions in the pathway amino-acid biosynthesis; L-histidine biosynthesis; L-histidine from 5-phospho-alpha-D-ribose 1-diphosphate: step 3/9. Functionally, catalyzes the hydrolysis of the adenine ring of phosphoribosyl-AMP. The protein is Phosphoribosyl-AMP cyclohydrolase of Pseudomonas syringae pv. syringae (strain B728a).